A 581-amino-acid chain; its full sequence is Probable peptidoglycan D,D-transpeptidase PenA (581 aa).

The chain crosses the membrane as a helical span at residues 28–48 (ISFVLMAIAVLFAGLIARGLY). Residue serine 310 is the Acyl-ester intermediate of the active site.

This sequence belongs to the transpeptidase family. FtsI subfamily.

It is found in the cell inner membrane. The enzyme catalyses Preferential cleavage: (Ac)2-L-Lys-D-Ala-|-D-Ala. Also transpeptidation of peptidyl-alanyl moieties that are N-acyl substituents of D-alanine.. The protein operates within cell wall biogenesis; peptidoglycan biosynthesis. In terms of biological role, catalyzes cross-linking of the peptidoglycan cell wall at the division septum. This Neisseria meningitidis serogroup A / serotype 4A (strain DSM 15465 / Z2491) protein is Probable peptidoglycan D,D-transpeptidase PenA.